Consider the following 436-residue polypeptide: 3-ketoacyl-CoA thiolase (436 aa).

Catalysis depends on Cys99, which acts as the Acyl-thioester intermediate. Catalysis depends on proton acceptor residues His392 and Cys422.

The protein belongs to the thiolase-like superfamily. Thiolase family. Heterotetramer of two alpha chains (FadJ) and two beta chains (FadI).

The protein resides in the cytoplasm. The catalysed reaction is an acyl-CoA + acetyl-CoA = a 3-oxoacyl-CoA + CoA. Its pathway is lipid metabolism; fatty acid beta-oxidation. Functionally, catalyzes the final step of fatty acid oxidation in which acetyl-CoA is released and the CoA ester of a fatty acid two carbons shorter is formed. This Escherichia coli O81 (strain ED1a) protein is 3-ketoacyl-CoA thiolase.